The chain runs to 252 residues: MAESKLVIGDRSFASRLIMGTGGATNLAVLEQALIASGTELTTVAIRRVDADGGTGLLDLLNRLGITPLPNTAGSRSAAEAVLTAQLAREALNTNWVKLEVIADERTLWPDAVELVRAAEQLVDDGFVVLPYTTDDPVLARRLEDTGCAAVMPLGSPIGTGLGIANPHNIEMIVAGARVPVVLDAGIGTASDAALAMELGCDAVLLASAVTRAADPPAMAAAMAAAVTAGYLARCAGRIPKRFWAQASSPAR.

Catalysis depends on K98, which acts as the Schiff-base intermediate with DXP. 1-deoxy-D-xylulose 5-phosphate-binding positions include G159, 185 to 186 (AG), and 207 to 208 (AS).

Belongs to the ThiG family. In terms of assembly, homotetramer. Forms heterodimers with either ThiH or ThiS.

Its subcellular location is the cytoplasm. The enzyme catalyses [ThiS sulfur-carrier protein]-C-terminal-Gly-aminoethanethioate + 2-iminoacetate + 1-deoxy-D-xylulose 5-phosphate = [ThiS sulfur-carrier protein]-C-terminal Gly-Gly + 2-[(2R,5Z)-2-carboxy-4-methylthiazol-5(2H)-ylidene]ethyl phosphate + 2 H2O + H(+). The protein operates within cofactor biosynthesis; thiamine diphosphate biosynthesis. Its function is as follows. Catalyzes the rearrangement of 1-deoxy-D-xylulose 5-phosphate (DXP) to produce the thiazole phosphate moiety of thiamine. Sulfur is provided by the thiocarboxylate moiety of the carrier protein ThiS. In vitro, sulfur can be provided by H(2)S. This Mycobacterium tuberculosis (strain ATCC 25177 / H37Ra) protein is Thiazole synthase.